The following is a 227-amino-acid chain: Enolase-phosphatase E1 (227 aa).

The Mg(2+) site is built by aspartate 12 and glutamate 14. Substrate contacts are provided by residues 118–119 (SS) and lysine 159. Residue aspartate 186 participates in Mg(2+) binding.

It belongs to the HAD-like hydrolase superfamily. MasA/MtnC family. In terms of assembly, monomer. Requires Mg(2+) as cofactor.

The protein resides in the cytoplasm. It is found in the nucleus. It carries out the reaction 5-methylsulfanyl-2,3-dioxopentyl phosphate + H2O = 1,2-dihydroxy-5-(methylsulfanyl)pent-1-en-3-one + phosphate. Its pathway is amino-acid biosynthesis; L-methionine biosynthesis via salvage pathway; L-methionine from S-methyl-5-thio-alpha-D-ribose 1-phosphate: step 3/6. It participates in amino-acid biosynthesis; L-methionine biosynthesis via salvage pathway; L-methionine from S-methyl-5-thio-alpha-D-ribose 1-phosphate: step 4/6. Bifunctional enzyme that catalyzes the enolization of 2,3-diketo-5-methylthiopentyl-1-phosphate (DK-MTP-1-P) into the intermediate 2-hydroxy-3-keto-5-methylthiopentenyl-1-phosphate (HK-MTPenyl-1-P), which is then dephosphorylated to form the acireductone 1,2-dihydroxy-3-keto-5-methylthiopentene (DHK-MTPene). The protein is Enolase-phosphatase E1 of Vanderwaltozyma polyspora (strain ATCC 22028 / DSM 70294 / BCRC 21397 / CBS 2163 / NBRC 10782 / NRRL Y-8283 / UCD 57-17) (Kluyveromyces polysporus).